Consider the following 281-residue polypeptide: Large ribosomal subunit protein uL2 (281 aa).

The segment at R224–K281 is disordered.

The protein belongs to the universal ribosomal protein uL2 family. Part of the 50S ribosomal subunit. Forms a bridge to the 30S subunit in the 70S ribosome.

Functionally, one of the primary rRNA binding proteins. Required for association of the 30S and 50S subunits to form the 70S ribosome, for tRNA binding and peptide bond formation. It has been suggested to have peptidyltransferase activity; this is somewhat controversial. Makes several contacts with the 16S rRNA in the 70S ribosome. In Metamycoplasma arthritidis (strain 158L3-1) (Mycoplasma arthritidis), this protein is Large ribosomal subunit protein uL2.